We begin with the raw amino-acid sequence, 197 residues long: MDTVELKAIIEALLFAAPGPVRLEQLALAADADPARVAPLLAELETEYLRAGRGFVLVELAEGYQLRTRPEHAEWVRRLHSSRPTRLSRAALEALAIIAYQQPVTRADIDYLRGVDSGGVVKSLLDKRLVRIVGKKDVPGRPLLYGTSREFLEFFGLRSLSDLPTLKEFTELTKESESLLFDFDAGAGGATASSEQA.

It belongs to the ScpB family. Homodimer. Homodimerization may be required to stabilize the binding of ScpA to the Smc head domains. Component of a cohesin-like complex composed of ScpA, ScpB and the Smc homodimer, in which ScpA and ScpB bind to the head domain of Smc. The presence of the three proteins is required for the association of the complex with DNA.

The protein resides in the cytoplasm. Participates in chromosomal partition during cell division. May act via the formation of a condensin-like complex containing Smc and ScpA that pull DNA away from mid-cell into both cell halves. The sequence is that of Segregation and condensation protein B from Syntrophotalea carbinolica (strain DSM 2380 / NBRC 103641 / GraBd1) (Pelobacter carbinolicus).